The primary structure comprises 158 residues: Trafficking protein particle complex subunit 6B (158 aa).

The protein belongs to the TRAPP small subunits family. BET3 subfamily. Homodimer. Part of a TRAPP complex. Heterodimer with TRAPPC3. The heterodimer TRAPPC6B-TRAPPC3 interacts with TRAPPC1 likely providing a core for TRAPP complex formation. Widely expressed. Expressed in lung, heart, liver, spleen, brain and kidney.

It localises to the golgi apparatus. The protein resides in the cis-Golgi network. It is found in the endoplasmic reticulum. In terms of biological role, component of a transport protein particle (TRAPP) complex that may function in specific stages of inter-organelle traffic. Specifically involved in the early development of neural circuitry, likely by controlling the frequency and amplitude of intracellular calcium transients implicated in the regulation of neuron differentiation and survival. The sequence is that of Trafficking protein particle complex subunit 6B from Mus musculus (Mouse).